A 131-amino-acid polypeptide reads, in one-letter code: Small ribosomal subunit protein uS8 (131 aa).

The protein belongs to the universal ribosomal protein uS8 family. In terms of assembly, part of the 30S ribosomal subunit. Contacts proteins S5 and S12.

Functionally, one of the primary rRNA binding proteins, it binds directly to 16S rRNA central domain where it helps coordinate assembly of the platform of the 30S subunit. This is Small ribosomal subunit protein uS8 from Sulfurovum sp. (strain NBC37-1).